The sequence spans 78 residues: Putative gastrointestinal growth factor xP1 (78 aa).

The signal sequence occupies residues Met-1 to Gly-23. A P-type domain is found at Glu-30 to Arg-73. 3 disulfides stabilise this stretch: Cys-32/Cys-58, Cys-42/Cys-57, and Cys-52/Cys-69.

As to expression, stomach mucosa.

The protein resides in the secreted. May act as a growth factor. This chain is Putative gastrointestinal growth factor xP1 (p1), found in Xenopus laevis (African clawed frog).